We begin with the raw amino-acid sequence, 542 residues long: MSDKVLVIGAGPNRIGQGIEFDYCTVHAVWAIQEEGYKAIIVNNNPETVSTDYDTSDKLYFEPITLEDVLNIVEKERPIGVLTQFGGQTSVNLTVPLAERGVRVLGTDPDDVDRLEDRDRFSKLLKKLGIPQPESGTANDPEEAVEVAEDIGYPVLVRPSYVIGGRAMEIVYDEEDLRRYIEEAAKVSPEHPILIDRFIEGGIECEIDGARDEAGNVLIPGIMEHIEEAGVHSGDSACVVPPQTLPEHAQETVLEYAEDIAEGANVIGLINIQFVYDPEEDEVYVIEANPRASRTVPFISKAVGIPLAKIGTKAILGREIPEVLDEMGLEPPDGDPGIVAVKEAVFSFEKWPGVDPVLGPEMKATGEVMGIDRTFGAAYWKAQLAAGHELPLEGTAVISVADRDKPDIVPIARKLQRLGFDLLATRGTASHLREHGIECEVVRKVSEGSPNIVDLIREGEIDLIINTPTEGKDARRDGYAIRRAAVKFKVPYITTIAAAKAAVEAIELVKEKGVTVNCLHDIHKGDWTPREVKPEELTRYGG.

The interval 1–389 (MSDKVLVIGA…WKAQLAAGHE (389 aa)) is carbamoyl phosphate synthetic domain. Residues 122–316 (SKLLKKLGIP…LAKIGTKAIL (195 aa)) form the ATP-grasp domain. Residues R158, R197, I199, E204, G230, V231, H232, S233, Q273, and E287 each coordinate ATP. Positions 273, 287, and 289 each coordinate Mg(2+). Mn(2+) contacts are provided by Q273, E287, and N289. Residues 388–542 (HELPLEGTAV…KPEELTRYGG (155 aa)) enclose the MGS-like domain. The tract at residues 390 to 542 (LPLEGTAVIS…KPEELTRYGG (153 aa)) is allosteric domain.

The protein belongs to the CarB family. As to quaternary structure, composed of two chains; the small (or glutamine) chain promotes the hydrolysis of glutamine to ammonia, which is used by the large (or ammonia) chain to synthesize carbamoyl phosphate. Tetramer of heterodimers (alpha,beta)4. It depends on Mg(2+) as a cofactor. Mn(2+) is required as a cofactor.

It catalyses the reaction hydrogencarbonate + L-glutamine + 2 ATP + H2O = carbamoyl phosphate + L-glutamate + 2 ADP + phosphate + 2 H(+). It carries out the reaction hydrogencarbonate + NH4(+) + 2 ATP = carbamoyl phosphate + 2 ADP + phosphate + 2 H(+). Its pathway is amino-acid biosynthesis; L-arginine biosynthesis; carbamoyl phosphate from bicarbonate: step 1/1. It participates in pyrimidine metabolism; UMP biosynthesis via de novo pathway; (S)-dihydroorotate from bicarbonate: step 1/3. Its function is as follows. Large subunit of the glutamine-dependent carbamoyl phosphate synthetase (CPSase). CPSase catalyzes the formation of carbamoyl phosphate from the ammonia moiety of glutamine, carbonate, and phosphate donated by ATP, constituting the first step of 2 biosynthetic pathways, one leading to arginine and/or urea and the other to pyrimidine nucleotides. The large subunit (synthetase) binds the substrates ammonia (free or transferred from glutamine from the small subunit), hydrogencarbonate and ATP and carries out an ATP-coupled ligase reaction, activating hydrogencarbonate by forming carboxy phosphate which reacts with ammonia to form carbamoyl phosphate. This chain is Carbamoyl phosphate synthase large chain, C-terminal section (carB2), found in Methanopyrus kandleri (strain AV19 / DSM 6324 / JCM 9639 / NBRC 100938).